The primary structure comprises 141 residues: Hydroperoxide reductase (141 aa).

Belongs to the OsmC/Ohr family. Homodimer.

It localises to the cytoplasm. Functionally, reduces organic and inorganic peroxide substrates. Protects the cell against oxidative stress. The sequence is that of Hydroperoxide reductase from Mycoplasma pneumoniae (strain ATCC 29342 / M129 / Subtype 1) (Mycoplasmoides pneumoniae).